The chain runs to 463 residues: MLLTLKNTGQLLVAACSKVARSLAKYHPRVNHHRHCVWCSKRGLTTGGTAQKQDILFHLCQQRHFLSGETLTCTSLVQGCHNLGPLGVELKRNLVAQWWNSVVVYREQVLGIDTLHHLSTPSSAPEKPLLAICTQHLKELPRDQLVKWLEDPAGKLEFLRHELLYGALLEYVPSMELLNKKMPFGLAEIGKCFHSIPEERNKGTILPRIGERTVASLVWFSSPKSSGQWQDYWLRQRLQWWQKFAQSPSGFSCNDIQDGQGRKSSLIQYEFPWGRETIETLCNMDDSALFQMHPGCTTKLQARDGRKSVVPHVVWVSGDLDRGILAYLSDALQQTEAPAVRGQYHQREVLKLHPTLAPIKVAVDMGKGPTGELRLVCQGLSSELREQGVYVWPGYQETLHGSLEQLYTKYDKMGVLFTVLVSESTLENGLLQVRSRDTTLKETIHVSKVKDFLVRYIAAAGNL.

Residues 1 to 44 (MLLTLKNTGQLLVAACSKVARSLAKYHPRVNHHRHCVWCSKRGL) constitute a mitochondrion transit peptide.

As to quaternary structure, heterotrimer composed of a catalytic subunit and a homodimer of accessory subunits.

The protein resides in the mitochondrion. Functionally, mitochondrial polymerase processivity subunit. It regulates the polymerase and exonuclease activities promoting processive DNA synthesis. Binds to ss-DNA. The polypeptide is DNA polymerase subunit gamma-2, mitochondrial (polg2) (Xenopus laevis (African clawed frog)).